The sequence spans 329 residues: Thiamine thiazole synthase (329 aa).

Substrate-binding positions include Cys-86, 107–108, Gly-115, and Val-180; that span reads EA. Cys-218 is subject to 2,3-didehydroalanine (Cys). Substrate contacts are provided by residues Asp-220, His-235, Met-287, and 297 to 299; that span reads RMG.

The protein belongs to the THI4 family. Homooctamer. It depends on Fe cation as a cofactor. Post-translationally, during the catalytic reaction, a sulfide is transferred from Cys-218 to a reaction intermediate, generating a dehydroalanine residue.

It localises to the cytoplasm. The protein resides in the nucleus. It catalyses the reaction [ADP-thiazole synthase]-L-cysteine + glycine + NAD(+) = [ADP-thiazole synthase]-dehydroalanine + ADP-5-ethyl-4-methylthiazole-2-carboxylate + nicotinamide + 3 H2O + 2 H(+). In terms of biological role, involved in biosynthesis of the thiamine precursor thiazole. Catalyzes the conversion of NAD and glycine to adenosine diphosphate 5-(2-hydroxyethyl)-4-methylthiazole-2-carboxylic acid (ADT), an adenylated thiazole intermediate. The reaction includes an iron-dependent sulfide transfer from a conserved cysteine residue of the protein to a thiazole intermediate. The enzyme can only undergo a single turnover, which suggests it is a suicide enzyme. May have additional roles in adaptation to various stress conditions and in DNA damage tolerance. This Phaeosphaeria nodorum (strain SN15 / ATCC MYA-4574 / FGSC 10173) (Glume blotch fungus) protein is Thiamine thiazole synthase.